The sequence spans 163 residues: Phosphopantetheine adenylyltransferase (163 aa).

T9 is a substrate binding site. ATP-binding positions include 9–10 (TF) and H17. Substrate contacts are provided by K41, T73, and R87. ATP contacts are provided by residues 88–90 (GLR), E98, and 123–129 (FSFISSS).

The protein belongs to the bacterial CoaD family. Homohexamer. The cofactor is Mg(2+).

Its subcellular location is the cytoplasm. It carries out the reaction (R)-4'-phosphopantetheine + ATP + H(+) = 3'-dephospho-CoA + diphosphate. The protein operates within cofactor biosynthesis; coenzyme A biosynthesis; CoA from (R)-pantothenate: step 4/5. Functionally, reversibly transfers an adenylyl group from ATP to 4'-phosphopantetheine, yielding dephospho-CoA (dPCoA) and pyrophosphate. This Desulfitobacterium hafniense (strain DSM 10664 / DCB-2) protein is Phosphopantetheine adenylyltransferase.